The primary structure comprises 683 residues: Cyclic nucleotide-gated channel alpha-1 (683 aa).

At 1–160 (MKTNIINTWH…PSGNMYYNWL (160 aa)) the chain is on the cytoplasmic side. A disordered region spans residues 34-144 (ACSSFSDNDN…PKEKKEEEKK (111 aa)). The span at 105–144 (SKADDKKESKKDPEKKKKKEKEKEKKKEEKPKEKKEEEKK) shows a compositional bias: basic and acidic residues. The chain crosses the membrane as a helical span at residues 161–182 (FCITLPVMYNWTMIIARACFDE). Topologically, residues 183 to 192 (LQSDYLEYWL) are extracellular. A helical membrane pass occupies residues 193 to 213 (IFDYVSDVVYLADMFVRTRTG). Residues 214 to 238 (YLEQGLLVKDELKLIEKYKANLQFK) are Cytoplasmic-facing. The helical transmembrane segment at 239-257 (LDVLSVIPTDLLYFKFGWN) threads the bilayer. Residues 258–262 (YPEIR) lie on the Extracellular side of the membrane. A helical membrane pass occupies residues 263–281 (LNRLLRISRMFEFFQRTET). Over 282–288 (RTNYPNI) the chain is Cytoplasmic. An ion conduction pathway region spans residues 286–394 (PNIFRISNLV…GNIGSMISNM (109 aa)). A helical transmembrane segment spans residues 289–312 (FRISNLVMYIVIIIHWNACVYYSI). At 313–335 (SKAIGFGNDTWVYPDVNDPEFGR) the chain is on the extracellular side. Residue asparagine 320 is glycosylated (N-linked (GlcNAc...) asparagine). 2 consecutive transmembrane segments (helical) span residues 336–370 (LARK…VFVV) and 371–395 (VDFL…SNMN). Positions 353–356 (TIGE) are selectivity filter. The interval 396–472 (AARAEFQSRV…DTLKKVRIFA (77 aa)) is C-linker. Residues 396–683 (AARAEFQSRV…ESEPTESLQG (288 aa)) lie on the Cytoplasmic side of the membrane. The interval 476–596 (AGLLVELVLK…EEKGRQILMK (121 aa)) is cyclic nucleotide-binding domain. Positions 536, 539, 552, and 553 each coordinate 3',5'-cyclic GMP. 3',5'-cyclic AMP is bound by residues arginine 552 and threonine 553. Residues 614 to 668 (LEEKVTRMEGSVDLLQTRFARILAEYESMQQKLKQRLTKVEKFLKPLIETEFSAL) adopt a coiled-coil conformation.

The protein belongs to the cyclic nucleotide-gated cation channel (TC 1.A.1.5) family. CNGA1 subfamily. Forms heterotetrameric channels composed of CNGA1 and CNGB1 subunits with 3:1 stoichiometry. May also form cyclic nucleotide-activated homotetrameric channels, that are efficiently activated by saturating cGMP, but poorly activated by saturating cAMP compared to the heterotetramer with CNGB1. The channel binds Ca(2+)-bound CALM1 via CaM1 and CaM2 regions of the CNGB1 subunit; this interaction modulates the affinity of the channel for cNMPs in response to intracellular Ca(2+) levels. Rod cells in the retina.

The protein localises to the cell membrane. The catalysed reaction is Ca(2+)(in) = Ca(2+)(out). It carries out the reaction Na(+)(in) = Na(+)(out). It catalyses the reaction K(+)(in) = K(+)(out). The enzyme catalyses NH4(+)(in) = NH4(+)(out). The catalysed reaction is Rb(+)(in) = Rb(+)(out). It carries out the reaction Li(+)(in) = Li(+)(out). It catalyses the reaction Cs(+)(in) = Cs(+)(out). In terms of biological role, pore-forming subunit of the rod cyclic nucleotide-gated channel. Mediates rod photoresponses at dim light converting transient changes in intracellular cGMP levels into electrical signals. In the dark, cGMP levels are high and keep the channel open enabling a steady inward current carried by Na(+) and Ca(2+) ions that leads to membrane depolarization and neurotransmitter release from synaptic terminals. Upon photon absorption cGMP levels decline leading to channel closure and membrane hyperpolarization that ultimately slows neurotransmitter release and signals the presence of light, the end point of the phototransduction cascade. Conducts cGMP- and cAMP-gated ion currents, with permeability for monovalent and divalent cations. The selectivity for Ca(2+) over Na(+) increases with cGMP concentrations, whereas the selectivity among monovalent ions is independent of the cGMP levels. This chain is Cyclic nucleotide-gated channel alpha-1, found in Rattus norvegicus (Rat).